The chain runs to 784 residues: DNA ligase (784 aa).

NAD(+) is bound by residues 31-35 (DAEYD), 80-81 (SL), and glutamate 120. Lysine 122 (N6-AMP-lysine intermediate) is an active-site residue. Residues arginine 143, glutamate 180, lysine 296, and lysine 320 each coordinate NAD(+). Cysteine 414, cysteine 417, cysteine 444, and cysteine 450 together coordinate Zn(2+). A BRCT domain is found at 701–784 (AEGLPLAGQT…AFMAEQGITL (84 aa)).

Belongs to the NAD-dependent DNA ligase family. LigA subfamily. Requires Mg(2+) as cofactor. Mn(2+) serves as cofactor.

It carries out the reaction NAD(+) + (deoxyribonucleotide)n-3'-hydroxyl + 5'-phospho-(deoxyribonucleotide)m = (deoxyribonucleotide)n+m + AMP + beta-nicotinamide D-nucleotide.. Functionally, DNA ligase that catalyzes the formation of phosphodiester linkages between 5'-phosphoryl and 3'-hydroxyl groups in double-stranded DNA using NAD as a coenzyme and as the energy source for the reaction. It is essential for DNA replication and repair of damaged DNA. The polypeptide is DNA ligase (Pseudomonas entomophila (strain L48)).